We begin with the raw amino-acid sequence, 1334 residues long: Putative transmembrane protein ORF1334 (1334 aa).

Residues 53 to 73 (VSIVVLVLTLFIIPVIIPPAH) form a helical membrane-spanning segment. A disordered region spans residues 1107–1135 (LSASTTPPSSTTPTPPSSSSSSSSSSSIS). Over residues 1110 to 1135 (STTPPSSTTPTPPSSSSSSSSSSSIS) the composition is skewed to low complexity. Helical transmembrane passes span 1256–1276 (AVLP…SFFI), 1292–1312 (IIYI…TSVV), and 1313–1333 (YGTV…SRSQ).

The protein resides in the host membrane. The sequence is that of Putative transmembrane protein ORF1334 from Acidianus two-tailed virus (ATV).